Here is a 351-residue protein sequence, read N- to C-terminus: Alternative oxidase, mitochondrial (351 aa).

Residues leucine 147–leucine 167 traverse the membrane as a helical segment. Fe cation is bound by residues glutamate 154, glutamate 193, and histidine 196. Residues leucine 212–serine 232 form a helical membrane-spanning segment. Fe cation contacts are provided by glutamate 244, glutamate 245, glutamate 299, and histidine 302. The tract at residues alanine 322–isoleucine 351 is disordered.

Belongs to the alternative oxidase family. It depends on Fe cation as a cofactor.

The protein resides in the mitochondrion inner membrane. Its function is as follows. Catalyzes cyanide-resistant oxygen consumption. May increase respiration when the cytochrome respiratory pathway is restricted, or in response to low temperatures. This chain is Alternative oxidase, mitochondrial (aox1), found in Aspergillus niger.